The primary structure comprises 92 residues: Integration host factor subunit beta (92 aa).

Belongs to the bacterial histone-like protein family. In terms of assembly, heterodimer of an alpha and a beta chain.

In terms of biological role, this protein is one of the two subunits of integration host factor, a specific DNA-binding protein that functions in genetic recombination as well as in transcriptional and translational control. This is Integration host factor subunit beta from Vibrio cholerae serotype O1 (strain ATCC 39541 / Classical Ogawa 395 / O395).